The sequence spans 993 residues: Serine/threonine-protein phosphatase 6 regulatory ankyrin repeat subunit B (993 aa).

ANK repeat units follow at residues 7-36, 40-69, 73-102, 106-135, 139-168, 172-201, 205-234, 238-267, 271-301, 305-334, 338-367, 371-400, 404-433, 437-466, 470-498, 531-561, 566-595, 599-628, 633-662, 669-698, 702-731, 735-764, 771-800, 803-832, 838-867, 871-901, 905-934, and 941-970; these read CEQP…DVNA, EKRT…RVNA, MWLT…DVNA, NWQT…SVNV, GGRT…NINA, KDRR…EVTC, KGYT…EIDE, YGNT…NVNQ, SGFT…DVNI, DGKS…EIDC, DGNT…DTAK, HSMF…EIDT, FGRT…DFHK, CGRT…NVNE, WGRT…DNSE, EGYN…GFEE, ALKS…DLDI, KGRT…SIFV, TKRT…NPEV, KGQT…NVDA, VGCT…SILC, RGRT…SEED, QGYT…FRKF, NPFT…PSIV, KGRT…QVNA, SGKT…DLTV, DLNT…DESL, and ALQT…CVLA. The tract at residues 974–993 is disordered; the sequence is NASRSNGPRSPPGTAVRKEE.

Protein phosphatase 6 (PP6) holoenzyme is proposed to be a heterotrimeric complex formed by the catalytic subunit, a SAPS domain-containing subunit (PP6R) and an ankyrin repeat-domain containing regulatory subunit (ARS). Interacts with PPP6R1.

In terms of biological role, putative regulatory subunit of protein phosphatase 6 (PP6) that may be involved in the recognition of phosphoprotein substrates. In Mus musculus (Mouse), this protein is Serine/threonine-protein phosphatase 6 regulatory ankyrin repeat subunit B (Ankrd44).